A 72-amino-acid chain; its full sequence is Crustacean hyperglycemic hormone (72 aa).

Q1 carries the pyrrolidone carboxylic acid; partial modification. 3 disulfide bridges follow: C7–C43, C23–C39, and C26–C52. V72 carries the post-translational modification Valine amide.

It belongs to the arthropod CHH/MIH/GIH/VIH hormone family. Post-translationally, the N-terminus forms pyrrolidone carboxylic acid in isoform CHH-II and is free in isoform CHH-I. In terms of tissue distribution, produced by the medulla terminalis X-organ in the eyestalks and transported to the sinus gland where they are stored and released.

The protein localises to the secreted. In terms of biological role, hormone found in the sinus gland of isopods and decapods which controls the blood sugar level. Has a secretagogue action over the amylase released from the midgut gland. May act as a stress hormone and may be involved in the control of molting and reproduction. The chain is Crustacean hyperglycemic hormone from Cancer pagurus (Rock crab).